A 90-amino-acid polypeptide reads, in one-letter code: Small ribosomal subunit protein uS15 (90 aa).

The protein belongs to the universal ribosomal protein uS15 family. As to quaternary structure, part of the 30S ribosomal subunit. Forms a bridge to the 50S subunit in the 70S ribosome, contacting the 23S rRNA.

In terms of biological role, one of the primary rRNA binding proteins, it binds directly to 16S rRNA where it helps nucleate assembly of the platform of the 30S subunit by binding and bridging several RNA helices of the 16S rRNA. Functionally, forms an intersubunit bridge (bridge B4) with the 23S rRNA of the 50S subunit in the ribosome. The chain is Small ribosomal subunit protein uS15 from Thermotoga maritima (strain ATCC 43589 / DSM 3109 / JCM 10099 / NBRC 100826 / MSB8).